Consider the following 321-residue polypeptide: Tetraketide alpha-pyrone reductase 2 (321 aa).

Ser2 carries the post-translational modification N-acetylserine. NADP(+) contacts are provided by residues 4–28 (YLVT…GHTV), Lys40, and Tyr160.

This sequence belongs to the NAD(P)-dependent epimerase/dehydratase family. Dihydroflavonol-4-reductase subfamily.

The protein resides in the cytoplasm. Functionally, may be involved in the biosynthesis of hydroxylated tetraketide compounds that serve as sporopollenin precursors (the main constituents of exine). Acts on tetraketide alpha-pyrones and reduces the carbonyl function on the tetraketide alkyl chain to a secondary alcohol function. This is Tetraketide alpha-pyrone reductase 2 (TKPR2) from Arabidopsis thaliana (Mouse-ear cress).